The primary structure comprises 28 residues: Short cationic peptide-1c (28 aa).

E28 carries the glutamic acid 1-amide modification.

In terms of tissue distribution, expressed by the venom gland.

It localises to the secreted. The polypeptide is Short cationic peptide-1c (Cupiennius salei (American wandering spider)).